Here is a 319-residue protein sequence, read N- to C-terminus: Beta-ketoacyl-[acyl-carrier-protein] synthase III (319 aa).

Residues Cys-115 and His-246 contribute to the active site. The segment at 247 to 251 (QANLR) is ACP-binding. Residue Asn-276 is part of the active site.

This sequence belongs to the thiolase-like superfamily. FabH family. Homodimer.

Its subcellular location is the cytoplasm. The enzyme catalyses malonyl-[ACP] + acetyl-CoA + H(+) = 3-oxobutanoyl-[ACP] + CO2 + CoA. The protein operates within lipid metabolism; fatty acid biosynthesis. Functionally, catalyzes the condensation reaction of fatty acid synthesis by the addition to an acyl acceptor of two carbons from malonyl-ACP. Catalyzes the first condensation reaction which initiates fatty acid synthesis and may therefore play a role in governing the total rate of fatty acid production. Possesses both acetoacetyl-ACP synthase and acetyl transacylase activities. Its substrate specificity determines the biosynthesis of branched-chain and/or straight-chain of fatty acids. The sequence is that of Beta-ketoacyl-[acyl-carrier-protein] synthase III from Coxiella burnetii (strain Dugway 5J108-111).